Reading from the N-terminus, the 92-residue chain is Small ribosomal subunit protein uS19 (92 aa).

This sequence belongs to the universal ribosomal protein uS19 family.

Protein S19 forms a complex with S13 that binds strongly to the 16S ribosomal RNA. This Buchnera aphidicola subsp. Acyrthosiphon pisum (strain 5A) protein is Small ribosomal subunit protein uS19.